A 770-amino-acid polypeptide reads, in one-letter code: MKIKNFIYFLIYFIFLFKVINGQNKTCKISVLLSGDKSDLGYNYMMNEARVLAESQLHMYPFSIYYEHLEESTLEAEHAIQDSVDKGANLIVVSSVIHFSLGVKYATKYKDEPIYWIIRGSKLVPTLPKVVILNFNSFELHYLLGYYAGLATKTGVVGFVSPGIGINTLSCDNSFYIGAKYARSNITFLDIHTGSWYNPEVSYKAAQKLIENGADVIGMSQDDMSVQKAIMDSGGLGLGVTGYPGHYQFGSDVAYSYLTNWTNLFITYANHVINDDWPAFDSFFTNLSRKDAIFMDDFSFRVPIDIQTKTKIELENLMNTSYAPYKSDPILESIGLQFSGNWINDTQFRANTKILPSYGDSTVDYPESLKIGVTVVSGFCIFLCLISMIIVIKFKEAKVIKSSSPIFCLLILFGCIVIFVGCIMFARSPTDGSCRSRVWLLSLGYTIFLGNLMVKNWRIWLLFDNPKLKKRAITNWKLYPWVSGIVIIDIVILSIWQALGDIVAESRTGIDSLTKYEYRNVCASSDQGSIALYLLLVFHGLILLVACFISFKIKVVDIEEFNESKPITTSVYIITFCLFIVIPIMVSSPTVTTQTTIICICALITTMLSIILLFGTKFFKMITVGLELGQTFVTSTKSSSHSQRTKSSKSSNGSGPKINGFGGNVLNLDDDSDEISSEKEKKKPIESNPKDHMAVFTSDEETSKASKFSSEQFSREQINDNIILENNNDNEEKQKDEEEIKEEKLLVSEIQAKRLSLEQNGQTEIDSNDV.

Positions 1-22 (MKIKNFIYFLIYFIFLFKVING) are cleaved as a signal peptide. Topologically, residues 23–370 (QNKTCKISVL…STVDYPESLK (348 aa)) are extracellular. Asparagine 24, asparagine 185, asparagine 260, asparagine 286, asparagine 319, and asparagine 344 each carry an N-linked (GlcNAc...) asparagine glycan. A helical membrane pass occupies residues 371-391 (IGVTVVSGFCIFLCLISMIIV). The Cytoplasmic portion of the chain corresponds to 392–405 (IKFKEAKVIKSSSP). The chain crosses the membrane as a helical span at residues 406-426 (IFCLLILFGCIVIFVGCIMFA). Residues 427–442 (RSPTDGSCRSRVWLLS) lie on the Extracellular side of the membrane. Residues 443 to 463 (LGYTIFLGNLMVKNWRIWLLF) traverse the membrane as a helical segment. At 464 to 483 (DNPKLKKRAITNWKLYPWVS) the chain is on the cytoplasmic side. Residues 484–504 (GIVIIDIVILSIWQALGDIVA) form a helical membrane-spanning segment. The Extracellular segment spans residues 505–528 (ESRTGIDSLTKYEYRNVCASSDQG). The helical transmembrane segment at 529 to 549 (SIALYLLLVFHGLILLVACFI) threads the bilayer. Residues 550–565 (SFKIKVVDIEEFNESK) are Cytoplasmic-facing. A helical transmembrane segment spans residues 566–586 (PITTSVYIITFCLFIVIPIMV). Residues 587-594 (SSPTVTTQ) are Extracellular-facing. A helical membrane pass occupies residues 595 to 615 (TTIICICALITTMLSIILLFG). Topologically, residues 616–770 (TKFFKMITVG…GQTEIDSNDV (155 aa)) are cytoplasmic. Positions 639-740 (SSHSQRTKSS…EEKQKDEEEI (102 aa)) are disordered. 2 stretches are compositionally biased toward basic and acidic residues: residues 676-693 (SSEK…KDHM) and 730-740 (NEEKQKDEEEI). Residues 715 to 760 (REQINDNIILENNNDNEEKQKDEEEIKEEKLLVSEIQAKRLSLEQN) adopt a coiled-coil conformation.

This sequence in the N-terminal section; belongs to the BMP lipoprotein family. In the C-terminal section; belongs to the G-protein coupled receptor 3 family. GABA-B receptor subfamily.

Its subcellular location is the membrane. In Dictyostelium discoideum (Social amoeba), this protein is Metabotropic glutamate receptor-like protein F (grlF).